Reading from the N-terminus, the 241-residue chain is Major prion protein (241 aa).

The first 15 residues, 1 to 15 (MLVLFVATWSDLGLC), serve as a signal peptide directing secretion. The interval 16 to 31 (KKRPKPGGWNTGGSRY) is interaction with ADGRG6. The interval 16–223 (KKRPKPGGWN…ESQAYYQRGS (208 aa)) is interaction with GRB2, ERI3 and SYN1. The segment at 18 to 100 (RPKPGGWNTG…QWNKPSKPKT (83 aa)) is disordered. Tandem repeats lie at residues 44-52 (PQGGGSWGQ), 53-60 (PHGGGWGQ), 61-68 (PHGGGWGQ), 69-76 (PHGGGWGQ), and 77-84 (PHGGGWGQ). The interval 44-84 (PQGGGSWGQPHGGGWGQPHGGGWGQPHGGGWGQPHGGGWGQ) is 5 X 8 AA tandem repeats of P-H-G-G-G-W-G-Q. Residues 45–88 (QGGGSWGQPHGGGWGQPHGGGWGQPHGGGWGQPHGGGWGQGGGT) are compositionally biased toward gly residues. Residues His54, Gly55, Gly56, His62, Gly63, Gly64, His70, Gly71, Gly72, His78, Gly79, and Gly80 each coordinate Cu(2+). A disulfide bridge links Cys172 with Cys207. 2 N-linked (GlcNAc...) asparagine glycosylation sites follow: Asn174 and Asn190. Ser223 carries the GPI-anchor amidated serine lipid modification. Residues 224 to 241 (SMVLFSSPPVILLISFLI) constitute a propeptide, removed in mature form.

The protein belongs to the prion family. Monomer and homodimer. Has a tendency to aggregate into amyloid fibrils containing a cross-beta spine, formed by a steric zipper of superposed beta-strands. Soluble oligomers may represent an intermediate stage on the path to fibril formation. Copper binding may promote oligomerization. Interacts with GRB2, APP, ERI3/PRNPIP and SYN1. Mislocalized cytosolically exposed PrP interacts with MGRN1; this interaction alters MGRN1 subcellular location and causes lysosomal enlargement. Interacts with APP. Interacts with KIAA1191. Interacts with ADGRG6.

It localises to the cell membrane. The protein resides in the golgi apparatus. Its primary physiological function is unclear. May play a role in neuronal development and synaptic plasticity. May be required for neuronal myelin sheath maintenance. May promote myelin homeostasis through acting as an agonist for ADGRG6 receptor. May play a role in iron uptake and iron homeostasis. Soluble oligomers are toxic to cultured neuroblastoma cells and induce apoptosis (in vitro). Association with GPC1 (via its heparan sulfate chains) targets PRNP to lipid rafts. Also provides Cu(2+) or Zn(2+) for the ascorbate-mediated GPC1 deaminase degradation of its heparan sulfate side chains. This chain is Major prion protein (PRNP), found in Plecturocebus moloch (Dusky titi monkey).